The sequence spans 476 residues: Bifunctional protein HldE (476 aa).

A ribokinase region spans residues 1–318 (MKPVLPDYSK…AEAVHGSKDT (318 aa)). Residue 195–198 (NMSE) coordinates ATP. D264 is an active-site residue. Residues 344–476 (MTNGCFDILH…IIEAIKGGRG (133 aa)) form a cytidylyltransferase region.

This sequence in the N-terminal section; belongs to the carbohydrate kinase PfkB family. The protein in the C-terminal section; belongs to the cytidylyltransferase family. In terms of assembly, homodimer.

It catalyses the reaction D-glycero-beta-D-manno-heptose 7-phosphate + ATP = D-glycero-beta-D-manno-heptose 1,7-bisphosphate + ADP + H(+). The enzyme catalyses D-glycero-beta-D-manno-heptose 1-phosphate + ATP + H(+) = ADP-D-glycero-beta-D-manno-heptose + diphosphate. It functions in the pathway nucleotide-sugar biosynthesis; ADP-L-glycero-beta-D-manno-heptose biosynthesis; ADP-L-glycero-beta-D-manno-heptose from D-glycero-beta-D-manno-heptose 7-phosphate: step 1/4. It participates in nucleotide-sugar biosynthesis; ADP-L-glycero-beta-D-manno-heptose biosynthesis; ADP-L-glycero-beta-D-manno-heptose from D-glycero-beta-D-manno-heptose 7-phosphate: step 3/4. In terms of biological role, catalyzes the phosphorylation of D-glycero-D-manno-heptose 7-phosphate at the C-1 position to selectively form D-glycero-beta-D-manno-heptose-1,7-bisphosphate. Functionally, catalyzes the ADP transfer from ATP to D-glycero-beta-D-manno-heptose 1-phosphate, yielding ADP-D-glycero-beta-D-manno-heptose. The sequence is that of Bifunctional protein HldE from Vibrio cholerae serotype O1 (strain M66-2).